A 195-amino-acid chain; its full sequence is Guanylate kinase (195 aa).

One can recognise a Guanylate kinase-like domain in the interval 12–191 (GLIILISGPS…TIEDIKQLIL (180 aa)). 19 to 26 (GPSGVGKG) is a binding site for ATP.

Belongs to the guanylate kinase family.

It is found in the cytoplasm. It catalyses the reaction GMP + ATP = GDP + ADP. Essential for recycling GMP and indirectly, cGMP. In Mycoplasmoides gallisepticum (strain R(low / passage 15 / clone 2)) (Mycoplasma gallisepticum), this protein is Guanylate kinase (gmk).